The chain runs to 1205 residues: U2 snRNP component prp10 (1205 aa).

3 disordered regions span residues 39–58, 122–175, and 202–254; these read QKEA…EGTQ, YADE…GRSY, and GTLK…RRSR. Over residues 44 to 58 the composition is skewed to polar residues; the sequence is KNSSTNGSVNIEGTQ. Basic and acidic residues predominate over residues 130-153; it reads MQERQSKKQIQDRESDYQKQRYDR. HEAT repeat units follow at residues 393 to 429, 431 to 473, 475 to 505, 506 to 540, 541 to 578, 582 to 619, 665 to 702, 745 to 782, 828 to 865, 912 to 949, 954 to 991, 993 to 1024, 1025 to 1061, 1065 to 1102, 1107 to 1142, and 1143 to 1179; these read LRER…DFGA, ALFN…PFTH, ILVV…AKAS, GLAH…ASAL, GVPA…LLGC, PHLK…AATP, HFTR…TDGV, VGSR…SLGV, PYLP…VLKA, PPIR…RGSE, REWM…AIGP, DVLA…AETC, MPFT…YIGE, DYVY…GCVG, DAMI…RNCI, and GVGP…QSAD.

This sequence belongs to the SF3B1 family. Belongs to the 40S cdc5-associated complex (or cwf complex), a spliceosome sub-complex reminiscent of a late-stage spliceosome composed of the U2, U5 and U6 snRNAs and at least brr2, cdc5, cwf2/prp3, cwf3/syf1, cwf4/syf3, cwf5/ecm2, spp42/cwf6, cwf7/spf27, cwf8, cwf9, cwf10, cwf11, cwf12, prp45/cwf13, cwf14, cwf15, cwf16, cwf17, cwf18, cwf19, cwf20, cwf21, cwf22, cwf23, cwf24, cwf25, cwf26, cyp7/cwf27, cwf28, cwf29/ist3, lea1, msl1, prp5/cwf1, prp10, prp12/sap130, prp17, prp22, sap61, sap62, sap114, sap145, slu7, smb1, smd1, smd3, smf1, smg1 and syf2.

It localises to the nucleus. In terms of biological role, contacts pre-mRNA on both sides of the branch site early in spliceosome assembly. The protein is U2 snRNP component prp10 (prp10) of Schizosaccharomyces pombe (strain 972 / ATCC 24843) (Fission yeast).